A 230-amino-acid chain; its full sequence is UPF0494 membrane protein PB2B2.14c (230 aa).

3 consecutive transmembrane segments (helical) span residues 78–98, 120–140, and 148–168; these read WPLL…NFEV, IWGP…GLIY, and AIPL…VAMV.

It belongs to the UPF0494 family.

Its subcellular location is the membrane. This is UPF0494 membrane protein PB2B2.14c from Schizosaccharomyces pombe (strain 972 / ATCC 24843) (Fission yeast).